A 557-amino-acid chain; its full sequence is UvrABC system protein C (557 aa).

In terms of domain architecture, GIY-YIG spans 14–89 (EEPGVYIFKN…IKKYRPKYNV (76 aa)). In terms of domain architecture, UVR spans 194-229 (EEVFDYLKEKMETHSKMLDFENAAKYRDLLLNLSNV).

It belongs to the UvrC family. In terms of assembly, interacts with UvrB in an incision complex.

The protein localises to the cytoplasm. Its function is as follows. The UvrABC repair system catalyzes the recognition and processing of DNA lesions. UvrC both incises the 5' and 3' sides of the lesion. The N-terminal half is responsible for the 3' incision and the C-terminal half is responsible for the 5' incision. In Thermotoga maritima (strain ATCC 43589 / DSM 3109 / JCM 10099 / NBRC 100826 / MSB8), this protein is UvrABC system protein C.